Reading from the N-terminus, the 53-residue chain is uncharacterized protein (53 aa).

The protein localises to the mitochondrion. This is an uncharacterized protein from Saccharomyces cerevisiae (strain ATCC 204508 / S288c) (Baker's yeast).